The following is a 234-amino-acid chain: LexA repressor (234 aa).

The segment at residues Phe26–Thr46 is a DNA-binding region (H-T-H motif). Positions Ala73–Asn107 are disordered. Active-site for autocatalytic cleavage activity residues include Ser155 and Lys192.

Belongs to the peptidase S24 family. Homodimer.

The enzyme catalyses Hydrolysis of Ala-|-Gly bond in repressor LexA.. Represses a number of genes involved in the response to DNA damage (SOS response), including recA and lexA. In the presence of single-stranded DNA, RecA interacts with LexA causing an autocatalytic cleavage which disrupts the DNA-binding part of LexA, leading to derepression of the SOS regulon and eventually DNA repair. This Caulobacter vibrioides (strain ATCC 19089 / CIP 103742 / CB 15) (Caulobacter crescentus) protein is LexA repressor.